The primary structure comprises 510 residues: Insulinoma-associated protein 1 (510 aa).

The segment covering 1–12 has biased composition (basic residues); it reads MPRGFLVKRSKK. Residues 1-20 are SNAG domain; sequence MPRGFLVKRSKKSTPVSYRV. Disordered regions lie at residues 1-110 and 176-226; these read MPRG…SREH and GAEA…PKAI. The segment at 2 to 7 is required and sufficient for interaction with KDM1A; it reads PRGFLV. The tract at residues 43–58 is necessary for interaction with CCND1; the sequence is PPAPSPVPGPLPPPPP. Pro residues predominate over residues 43-59; the sequence is PPAPSPVPGPLPPPPPA. Composition is skewed to low complexity over residues 64–74 and 209–218; these read AALAAALACAP and EPPAKAVKAP. The segment at 267 to 287 adopts a C2H2-type 1; atypical zinc-finger fold; it reads FICQLCKEEYADPFALAQHKC. The C2H2-type 2 zinc finger occupies 295–317; it reads YRCPECAKVFSCPANLASHRRWH. Residues 315 to 362 form a disordered region; it reads RWHKPRPAPAAARAPEPEAAARAEAREAPGGGSDRDTPSPGGVSESGS. Residues 329 to 351 show a composition bias toward basic and acidic residues; sequence PEPEAAARAEAREAPGGGSDRDT. 3 C2H2-type zinc fingers span residues 367-389, 441-464, and 469-492; these read YECH…LLAH, HLCP…RLLH, and FPCK…NKCH.

Belongs to the INSM1 family. In terms of assembly, interacts (via the SNAG domain) with HDAC1. Interacts (via the SNAG domain) with HDAC2. Interacts (via the SNAG domain) with KDM1A. Interacts (via the SNAG domain) with RCOR1. Interacts with SORBS1. Interacts (via the N-terminal region) with CCND1 (via cyclin N-terminal domain); the interaction competes with the binding of CCND1 to CDK4 during cell cycle progression and increases its transcriptional repressor activity. Interacts with HDAC3; the interaction increases its transcriptional repressor activity. In terms of tissue distribution, expressed in pancreatic duct cells. Expressed in several tumor cell lines of neuroendocrine origin including pheochromocytoma, medullary thyroid carcinoma, insulinoma, medulloblastoma, retinoblastoma, pheochromacytoma, medullary thyroid carcinoma and small cell lung carcinoma.

The protein resides in the nucleus. In terms of biological role, sequence-specific DNA-binding transcriptional regulator that plays a key role in neurogenesis and neuroendocrine cell differentiation during embryonic and/or fetal development. Binds to the consensus sequence 5'-[TG][TC][TC][TT][GA]GGG[CG]A-3' in target promoters. Acts as a transcriptional repressor of NEUROD1 and INS expression via its interaction with cyclin CCND1 in a cell cycle-independent manner. Negatively regulates skeletal muscle-specific gene expression in endocrine cells of the pituitary by inhibiting the Notch signaling pathway. Represses target gene transcription by recruiting chromatin-modifying factors, such as HDAC1, HDAC2, HDAC3, KDM1A and RCOR1 histone deacetylases. Binds to its own promoter, suggesting autoregulation as a self-control feedback mechanism. Competes with histone H3 for the same binding site on the histone demethylase complex formed by KDM1A and RCOR1, and thereby inhibits demethylation of histone H3 at 'Lys-4'. Promotes the generation and expansion of neuronal basal progenitor cells in the developing neocortex. Involved in the differentiation of endocrine cells of the developing anterior pituitary gland, of the pancreas and intestine, and of sympatho-adrenal cells in the peripheral nervous system. Promotes cell cycle signaling arrest and inhibition of cellular proliferation. The sequence is that of Insulinoma-associated protein 1 (INSM1) from Homo sapiens (Human).